Here is a 288-residue protein sequence, read N- to C-terminus: Phytanoyl-CoA dioxygenase domain-containing protein 1 homolog (288 aa).

2-oxoglutarate contacts are provided by residues lysine 95, methionine 134, histidine 149–aspartate 151, and tryptophan 167. Histidine 149 and aspartate 151 together coordinate Fe cation. Histidine 242 serves as a coordination point for Fe cation. 2-oxoglutarate contacts are provided by serine 244 and arginine 253.

It belongs to the PhyH family. PHYHD1 subfamily. Fe cation serves as cofactor.

Has alpha-ketoglutarate-dependent dioxygenase activity. Does not show detectable activity towards fatty acid CoA thioesters. Is not expected to be active with phytanoyl CoA. This chain is Phytanoyl-CoA dioxygenase domain-containing protein 1 homolog, found in Caenorhabditis elegans.